Reading from the N-terminus, the 92-residue chain is UPF0250 protein XF_1271 (92 aa).

This sequence belongs to the UPF0250 family.

This is UPF0250 protein XF_1271 from Xylella fastidiosa (strain 9a5c).